A 96-amino-acid chain; its full sequence is ATP-dependent Clp protease adapter protein ClpS (96 aa).

It belongs to the ClpS family. In terms of assembly, binds to the N-terminal domain of the chaperone ClpA.

In terms of biological role, involved in the modulation of the specificity of the ClpAP-mediated ATP-dependent protein degradation. The protein is ATP-dependent Clp protease adapter protein ClpS of Streptomyces coelicolor (strain ATCC BAA-471 / A3(2) / M145).